The chain runs to 536 residues: 2-isopropylmalate synthase (536 aa).

Residues 8–273 form the Pyruvate carboxyltransferase domain; that stretch reads VLIFDTTLRD…FFGRDPESPT (266 aa). Asp-17, His-208, His-210, and Asn-244 together coordinate Mn(2+). Residues 408–536 are regulatory domain; it reads QLQLVQVSCG…PQHDLIKANL (129 aa).

This sequence belongs to the alpha-IPM synthase/homocitrate synthase family. LeuA type 1 subfamily. Homodimer. The cofactor is Mn(2+).

The protein localises to the cytoplasm. The catalysed reaction is 3-methyl-2-oxobutanoate + acetyl-CoA + H2O = (2S)-2-isopropylmalate + CoA + H(+). The protein operates within amino-acid biosynthesis; L-leucine biosynthesis; L-leucine from 3-methyl-2-oxobutanoate: step 1/4. Its function is as follows. Catalyzes the condensation of the acetyl group of acetyl-CoA with 3-methyl-2-oxobutanoate (2-ketoisovalerate) to form 3-carboxy-3-hydroxy-4-methylpentanoate (2-isopropylmalate). This chain is 2-isopropylmalate synthase, found in Prochlorococcus marinus (strain MIT 9211).